The sequence spans 286 residues: Nucleotide-binding protein Sfum_2066 (286 aa).

Residue 8–15 coordinates ATP; the sequence is GLSGSGKS. 59-62 contributes to the GTP binding site; that stretch reads DIRE.

Belongs to the RapZ-like family.

In terms of biological role, displays ATPase and GTPase activities. This chain is Nucleotide-binding protein Sfum_2066, found in Syntrophobacter fumaroxidans (strain DSM 10017 / MPOB).